The chain runs to 398 residues: UDP-D-apiose/UDP-D-xylose synthase (398 aa).

57 to 88 (DVYCDKIRHLVDPAPPHLHGRISFHRLNIKND) contacts NAD(+). Arg190 provides a ligand contact to substrate. Tyr193 (proton acceptor) is an active-site residue. 193–197 (YACAK) lines the NAD(+) pocket. A substrate-binding site is contributed by Asn222. Arg243 contacts NAD(+). Residues 244–248 (VLACF), 261–268 (VDGGQSQR), and 345–349 (DSDKR) contribute to the substrate site.

It belongs to the NAD(P)-dependent epimerase/dehydratase family. As to quaternary structure, homodimer. Requires NAD(+) as cofactor.

Its subcellular location is the cytoplasm. Its function is as follows. Catalyzes the conversion of UDP-D-glucuronate to a mixture of UDP-D-apiose and UDP-D-xylose. D-Apiose (3-C-hydroxymethyl-d-erythrose) is the only plant cell wall monosaccharide with a branched carbon skeleton and found in rhamnogalacturonan II (RG-II), apiogalacturonan, and several apioglycosides. The protein is UDP-D-apiose/UDP-D-xylose synthase of Oryza sativa subsp. japonica (Rice).